The following is a 379-amino-acid chain: Glutamate 5-kinase (379 aa).

K20 is an ATP binding site. Substrate contacts are provided by S59, D146, and N158. Position 220–226 (220–226 (SGGMYSK)) interacts with ATP. The PUA domain occupies 285 to 362 (TGSVVVDDGA…AELTAILGDN (78 aa)).

The protein belongs to the glutamate 5-kinase family.

The protein localises to the cytoplasm. It carries out the reaction L-glutamate + ATP = L-glutamyl 5-phosphate + ADP. Its pathway is amino-acid biosynthesis; L-proline biosynthesis; L-glutamate 5-semialdehyde from L-glutamate: step 1/2. Its function is as follows. Catalyzes the transfer of a phosphate group to glutamate to form L-glutamate 5-phosphate. The protein is Glutamate 5-kinase of Oleidesulfovibrio alaskensis (strain ATCC BAA-1058 / DSM 17464 / G20) (Desulfovibrio alaskensis).